The sequence spans 288 residues: Homoserine kinase (288 aa).

79–89 (PLARGLGSSSS) contributes to the ATP binding site.

The protein belongs to the GHMP kinase family. Homoserine kinase subfamily.

The protein localises to the cytoplasm. It catalyses the reaction L-homoserine + ATP = O-phospho-L-homoserine + ADP + H(+). Its pathway is amino-acid biosynthesis; L-threonine biosynthesis; L-threonine from L-aspartate: step 4/5. Functionally, catalyzes the ATP-dependent phosphorylation of L-homoserine to L-homoserine phosphate. This chain is Homoserine kinase, found in Streptococcus sanguinis (strain SK36).